Reading from the N-terminus, the 356-residue chain is Phosphate acyltransferase (356 aa).

It belongs to the PlsX family. In terms of assembly, homodimer. Probably interacts with PlsY.

Its subcellular location is the cytoplasm. The catalysed reaction is a fatty acyl-[ACP] + phosphate = an acyl phosphate + holo-[ACP]. It participates in lipid metabolism; phospholipid metabolism. Functionally, catalyzes the reversible formation of acyl-phosphate (acyl-PO(4)) from acyl-[acyl-carrier-protein] (acyl-ACP). This enzyme utilizes acyl-ACP as fatty acyl donor, but not acyl-CoA. This Shigella flexneri serotype 5b (strain 8401) protein is Phosphate acyltransferase.